A 359-amino-acid chain; its full sequence is 4-hydroxy-tetrahydrodipicolinate synthase, chloroplastic (359 aa).

Residues 1 to 33 (MSSSIIGRCHFVADSIEAAGTKRRTTRWRSPRA) constitute a chloroplast transit peptide. Thr102 contributes to the pyruvate binding site. Tyr188 acts as the Proton donor/acceptor in catalysis. Lys216 functions as the Schiff-base intermediate with substrate in the catalytic mechanism. Residue Ile255 participates in pyruvate binding.

Belongs to the DapA family.

It localises to the plastid. It is found in the chloroplast. It catalyses the reaction L-aspartate 4-semialdehyde + pyruvate = (2S,4S)-4-hydroxy-2,3,4,5-tetrahydrodipicolinate + H2O + H(+). The protein operates within amino-acid biosynthesis; L-lysine biosynthesis via DAP pathway; (S)-tetrahydrodipicolinate from L-aspartate: step 3/4. Catalyzes the condensation of (S)-aspartate-beta-semialdehyde [(S)-ASA] and pyruvate to 4-hydroxy-tetrahydrodipicolinate (HTPA). The polypeptide is 4-hydroxy-tetrahydrodipicolinate synthase, chloroplastic (DHPS1) (Nicotiana tabacum (Common tobacco)).